A 100-amino-acid chain; its full sequence is Large ribosomal subunit protein uL23 (100 aa).

This sequence belongs to the universal ribosomal protein uL23 family. As to quaternary structure, part of the 50S ribosomal subunit. Contacts protein L29, and trigger factor when it is bound to the ribosome.

One of the early assembly proteins it binds 23S rRNA. One of the proteins that surrounds the polypeptide exit tunnel on the outside of the ribosome. Forms the main docking site for trigger factor binding to the ribosome. The sequence is that of Large ribosomal subunit protein uL23 from Sodalis glossinidius (strain morsitans).